The sequence spans 229 residues: Potassium/proton antiporter CemA (229 aa).

A run of 3 helical transmembrane segments spans residues 7 to 27 (FSPIFHLSFIVFLPWGIYLSF), 106 to 126 (MILRLSTNLICVVIISGFYIW), and 189 to 209 (IISGLVSTFPVILDTIFKYWI).

This sequence belongs to the CemA family.

Its subcellular location is the plastid membrane. The catalysed reaction is K(+)(in) + H(+)(out) = K(+)(out) + H(+)(in). Functionally, may be involved in proton extrusion. The chain is Potassium/proton antiporter CemA from Cuscuta reflexa (Southern Asian dodder).